The following is a 377-amino-acid chain: Putative F-box only protein 10 (377 aa).

The 46-residue stretch at 1 to 46 (MVSVNLPWELVEEILYRVPPQSLARFRTVCKQWNSLFDDNKFVNDH) folds into the F-box domain.

In Arabidopsis thaliana (Mouse-ear cress), this protein is Putative F-box only protein 10 (FBX10).